A 353-amino-acid polypeptide reads, in one-letter code: Quinolinate synthase (353 aa).

Positions 47 and 68 each coordinate iminosuccinate. Position 113 (cysteine 113) interacts with [4Fe-4S] cluster. Residues 139–141 and serine 156 each bind iminosuccinate; that span reads YAN. Position 200 (cysteine 200) interacts with [4Fe-4S] cluster. Residues 226-228 and threonine 243 contribute to the iminosuccinate site; that span reads HPE. Residue cysteine 297 coordinates [4Fe-4S] cluster.

The protein belongs to the quinolinate synthase family. Type 1 subfamily. The cofactor is [4Fe-4S] cluster.

The protein resides in the cytoplasm. It carries out the reaction iminosuccinate + dihydroxyacetone phosphate = quinolinate + phosphate + 2 H2O + H(+). Its pathway is cofactor biosynthesis; NAD(+) biosynthesis; quinolinate from iminoaspartate: step 1/1. Functionally, catalyzes the condensation of iminoaspartate with dihydroxyacetone phosphate to form quinolinate. This is Quinolinate synthase from Vibrio campbellii (strain ATCC BAA-1116).